The sequence spans 414 residues: 3-oxoacyl-[acyl-carrier-protein] synthase 2 (414 aa).

In terms of domain architecture, Ketosynthase family 3 (KS3) spans 4-411 (NIRVVITGMG…GHNAVLVFKK (408 aa)). Residues Cys165, His304, and His341 each act as for beta-ketoacyl synthase activity in the active site.

This sequence belongs to the thiolase-like superfamily. Beta-ketoacyl-ACP synthases family.

It catalyses the reaction a fatty acyl-[ACP] + malonyl-[ACP] + H(+) = a 3-oxoacyl-[ACP] + holo-[ACP] + CO2. The catalysed reaction is (9Z)-hexadecenoyl-[ACP] + malonyl-[ACP] + H(+) = 3-oxo-(11Z)-octadecenoyl-[ACP] + holo-[ACP] + CO2. It participates in lipid metabolism; fatty acid biosynthesis. Functionally, involved in the type II fatty acid elongation cycle. Catalyzes the elongation of a wide range of acyl-ACP by the addition of two carbons from malonyl-ACP to an acyl acceptor. Can efficiently catalyze the conversion of palmitoleoyl-ACP (cis-hexadec-9-enoyl-ACP) to cis-vaccenoyl-ACP (cis-octadec-11-enoyl-ACP), an essential step in the thermal regulation of fatty acid composition. The protein is 3-oxoacyl-[acyl-carrier-protein] synthase 2 (fabF) of Staphylococcus aureus (strain MRSA252).